Here is a 306-residue protein sequence, read N- to C-terminus: Aspartate carbamoyltransferase catalytic subunit (306 aa).

Positions 51 and 52 each coordinate carbamoyl phosphate. Lys-79 contributes to the L-aspartate binding site. Residues Arg-101, His-130, and Gln-133 each coordinate carbamoyl phosphate. L-aspartate is bound by residues Arg-163 and Arg-215. The carbamoyl phosphate site is built by Gly-256 and Pro-257.

The protein belongs to the aspartate/ornithine carbamoyltransferase superfamily. ATCase family. In terms of assembly, heterododecamer (2C3:3R2) of six catalytic PyrB chains organized as two trimers (C3), and six regulatory PyrI chains organized as three dimers (R2).

The catalysed reaction is carbamoyl phosphate + L-aspartate = N-carbamoyl-L-aspartate + phosphate + H(+). Its pathway is pyrimidine metabolism; UMP biosynthesis via de novo pathway; (S)-dihydroorotate from bicarbonate: step 2/3. Its function is as follows. Catalyzes the condensation of carbamoyl phosphate and aspartate to form carbamoyl aspartate and inorganic phosphate, the committed step in the de novo pyrimidine nucleotide biosynthesis pathway. The chain is Aspartate carbamoyltransferase catalytic subunit from Ehrlichia ruminantium (strain Welgevonden).